We begin with the raw amino-acid sequence, 211 residues long: Thiamine-phosphate synthase (211 aa).

4-amino-2-methyl-5-(diphosphooxymethyl)pyrimidine contacts are provided by residues 37–41 (QLRIK) and Asn-69. Residues Asp-70 and Asp-89 each contribute to the Mg(2+) site. Ser-108 serves as a coordination point for 4-amino-2-methyl-5-(diphosphooxymethyl)pyrimidine. 134 to 136 (TQT) contributes to the 2-[(2R,5Z)-2-carboxy-4-methylthiazol-5(2H)-ylidene]ethyl phosphate binding site. Lys-137 provides a ligand contact to 4-amino-2-methyl-5-(diphosphooxymethyl)pyrimidine. Residues Gly-166 and 186 to 187 (VS) contribute to the 2-[(2R,5Z)-2-carboxy-4-methylthiazol-5(2H)-ylidene]ethyl phosphate site.

It belongs to the thiamine-phosphate synthase family. Mg(2+) is required as a cofactor.

The enzyme catalyses 2-[(2R,5Z)-2-carboxy-4-methylthiazol-5(2H)-ylidene]ethyl phosphate + 4-amino-2-methyl-5-(diphosphooxymethyl)pyrimidine + 2 H(+) = thiamine phosphate + CO2 + diphosphate. It carries out the reaction 2-(2-carboxy-4-methylthiazol-5-yl)ethyl phosphate + 4-amino-2-methyl-5-(diphosphooxymethyl)pyrimidine + 2 H(+) = thiamine phosphate + CO2 + diphosphate. It catalyses the reaction 4-methyl-5-(2-phosphooxyethyl)-thiazole + 4-amino-2-methyl-5-(diphosphooxymethyl)pyrimidine + H(+) = thiamine phosphate + diphosphate. It functions in the pathway cofactor biosynthesis; thiamine diphosphate biosynthesis; thiamine phosphate from 4-amino-2-methyl-5-diphosphomethylpyrimidine and 4-methyl-5-(2-phosphoethyl)-thiazole: step 1/1. Its function is as follows. Condenses 4-methyl-5-(beta-hydroxyethyl)thiazole monophosphate (THZ-P) and 2-methyl-4-amino-5-hydroxymethyl pyrimidine pyrophosphate (HMP-PP) to form thiamine monophosphate (TMP). The polypeptide is Thiamine-phosphate synthase (Salmonella choleraesuis (strain SC-B67)).